A 145-amino-acid chain; its full sequence is Large ribosomal subunit protein uL11 (145 aa).

It belongs to the universal ribosomal protein uL11 family. In terms of assembly, part of the ribosomal stalk of the 50S ribosomal subunit. Interacts with L10 and the large rRNA to form the base of the stalk. L10 forms an elongated spine to which L12 dimers bind in a sequential fashion forming a multimeric L10(L12)X complex. Post-translationally, one or more lysine residues are methylated.

Functionally, forms part of the ribosomal stalk which helps the ribosome interact with GTP-bound translation factors. This is Large ribosomal subunit protein uL11 from Coxiella burnetii (strain Dugway 5J108-111).